The primary structure comprises 131 residues: uncharacterized protein (131 aa).

A CCHC-type; degenerate zinc finger spans residues 64 to 81 (VNCDKCGKPGNVKNDCPG).

This is an uncharacterized protein from Homo sapiens (Human).